We begin with the raw amino-acid sequence, 372 residues long: Tryptophan--tRNA ligase (372 aa).

The 'HIGH' region signature appears at 79 to 87 (PSGKFHFGH). Residues 247-268 (KLQPGLDGRKMSSSRPDSTIFL) form a disordered region. Positions 256-260 (KMSSS) match the 'KMSKS' region motif. The span at 257–267 (MSSSRPDSTIF) shows a compositional bias: polar residues.

Belongs to the class-I aminoacyl-tRNA synthetase family.

Its subcellular location is the cytoplasm. The catalysed reaction is tRNA(Trp) + L-tryptophan + ATP = L-tryptophyl-tRNA(Trp) + AMP + diphosphate + H(+). The protein is Tryptophan--tRNA ligase of Aeropyrum pernix (strain ATCC 700893 / DSM 11879 / JCM 9820 / NBRC 100138 / K1).